The sequence spans 213 residues: Embryo-specific protein ATS3 (213 aa).

Residues 1-21 (MTFPSLSVSFLFFAFIFVTHA) form the signal peptide. Positions 34 to 148 (CPYTVVVMTS…LNTWYGHNNC (115 aa)) constitute a PLAT domain. The tract at residues 147–188 (NCNTTGRPSSPDLPPPHFPPEFPPETPTTPPPPPPRPSAASR) is disordered. N149 carries an N-linked (GlcNAc...) asparagine glycan. Residues 157–183 (PDLPPPHFPPEFPPETPTTPPPPPPRP) are compositionally biased toward pro residues.

Expressed in seeds. Expression is restricted to the developing embryo.

Its subcellular location is the secreted. Functionally, may play a role during embryo development. The sequence is that of Embryo-specific protein ATS3 from Arabidopsis thaliana (Mouse-ear cress).